The chain runs to 73 residues: Disintegrin trigramin-gamma (73 aa).

Residues 1–73 (EAGEDCDCGS…AGCPRNPLHA (73 aa)) form the Disintegrin domain. 6 cysteine pairs are disulfide-bonded: Cys-6-Cys-21, Cys-8-Cys-16, Cys-15-Cys-38, Cys-29-Cys-35, Cys-34-Cys-59, and Cys-47-Cys-66. The Cell attachment site signature appears at 51 to 53 (RGD).

This sequence belongs to the venom metalloproteinase (M12B) family. P-II subfamily. P-IIa sub-subfamily. As to quaternary structure, monomer (disintegrin). As to expression, expressed by the venom gland.

Its subcellular location is the secreted. Functionally, inhibits fibrinogen interaction with platelets. Acts by binding to alpha-IIb/beta-3 (ITGA2B/ITGB3) on the platelet surface and inhibits aggregation induced by ADP, thrombin, platelet-activating factor and collagen. This chain is Disintegrin trigramin-gamma, found in Craspedocephalus gramineus (Bamboo pit viper).